We begin with the raw amino-acid sequence, 546 residues long: Chaperonin GroEL (546 aa).

Residues 29 to 32, Lys50, 86 to 90, Gly415, and Asp495 each bind ATP; these read TLGP and DGTTT.

Belongs to the chaperonin (HSP60) family. In terms of assembly, forms a cylinder of 14 subunits composed of two heptameric rings stacked back-to-back. Interacts with the co-chaperonin GroES.

The protein resides in the cytoplasm. The catalysed reaction is ATP + H2O + a folded polypeptide = ADP + phosphate + an unfolded polypeptide.. Together with its co-chaperonin GroES, plays an essential role in assisting protein folding. The GroEL-GroES system forms a nano-cage that allows encapsulation of the non-native substrate proteins and provides a physical environment optimized to promote and accelerate protein folding. This chain is Chaperonin GroEL, found in Parabacteroides distasonis (strain ATCC 8503 / DSM 20701 / CIP 104284 / JCM 5825 / NCTC 11152).